The chain runs to 370 residues: ADP-ribosylhydrolase ARH3 (370 aa).

Mg(2+)-binding residues include Glu-35, Asp-66, and Asp-67. Residue Asp-66 participates in substrate binding. Substrate-binding positions include 135–141 (RGSFGNG), His-171, Leu-225, and Ile-261. Asp-304, Asp-306, and Thr-307 together coordinate Mg(2+).

It belongs to the ADP-ribosylglycohydrolase family. In terms of assembly, monomer. Mg(2+) is required as a cofactor.

Its subcellular location is the nucleus. The protein resides in the cytoplasm. The protein localises to the chromosome. It is found in the mitochondrion matrix. The catalysed reaction is [(1''-&gt;2')-ADP-alpha-D-ribose](n) + H2O = [(1''-&gt;2')-ADP-alpha-D-ribose](n-1) + ADP-D-ribose. It carries out the reaction 1''-O-acetyl-ADP-alpha-D-ribose + H2O = ADP-D-ribose + acetate + H(+). It catalyses the reaction O-(ADP-D-ribosyl)-L-seryl-[protein] + H2O = ADP-D-ribose + L-seryl-[protein]. The enzyme catalyses alpha-NAD(+) + H2O = ADP-D-ribose + nicotinamide + H(+). The protein undergoes a dramatic conformational switch from closed to open states upon substrate-binding, which enables specific substrate recognition for the 1''-O-linkage. The glutamate flap (Glu-35) blocks substrate entrance to Mg(2+) in the unliganded closed state. In presence of substrate, Glu-35 is ejected from the active site: this closed-to-open transition significantly widens the substrate-binding channel and precisely positions the scissile 1''-O-linkage for cleavage while securing tightly 2'- and 3'-hydroxyls of ADP-ribose. Its function is as follows. ADP-ribosylhydrolase that preferentially hydrolyzes the scissile alpha-O-linkage attached to the anomeric C1'' position of ADP-ribose and acts on different substrates, such as proteins ADP-ribosylated on serine and threonine, free poly(ADP-ribose) and O-acetyl-ADP-D-ribose. Specifically acts as a serine mono-ADP-ribosylhydrolase by mediating the removal of mono-ADP-ribose attached to serine residues on proteins, thereby playing a key role in DNA damage response. Serine ADP-ribosylation of proteins constitutes the primary form of ADP-ribosylation of proteins in response to DNA damage. Does not hydrolyze ADP-ribosyl-arginine, -cysteine, -diphthamide, or -asparagine bonds. Also able to degrade protein free poly(ADP-ribose), which is synthesized in response to DNA damage: free poly(ADP-ribose) acts as a potent cell death signal and its degradation by ADPRHL2 protects cells from poly(ADP-ribose)-dependent cell death, a process named parthanatos. Also hydrolyzes free poly(ADP-ribose) in mitochondria. Specifically digests O-acetyl-ADP-D-ribose, a product of deacetylation reactions catalyzed by sirtuins. Specifically degrades 1''-O-acetyl-ADP-D-ribose isomer, rather than 2''-O-acetyl-ADP-D-ribose or 3''-O-acetyl-ADP-D-ribose isomers. In Danio rerio (Zebrafish), this protein is ADP-ribosylhydrolase ARH3 (adprs).